The following is a 379-amino-acid chain: Succinyl-diaminopimelate desuccinylase (379 aa).

Residue His-70 participates in Zn(2+) binding. Asp-72 is an active-site residue. Asp-103 is a Zn(2+) binding site. The active-site Proton acceptor is the Glu-137. Zn(2+)-binding residues include Glu-138, Glu-166, and His-352.

The protein belongs to the peptidase M20A family. DapE subfamily. In terms of assembly, homodimer. Zn(2+) is required as a cofactor. Co(2+) serves as cofactor.

The catalysed reaction is N-succinyl-(2S,6S)-2,6-diaminopimelate + H2O = (2S,6S)-2,6-diaminopimelate + succinate. It functions in the pathway amino-acid biosynthesis; L-lysine biosynthesis via DAP pathway; LL-2,6-diaminopimelate from (S)-tetrahydrodipicolinate (succinylase route): step 3/3. Catalyzes the hydrolysis of N-succinyl-L,L-diaminopimelic acid (SDAP), forming succinate and LL-2,6-diaminopimelate (DAP), an intermediate involved in the bacterial biosynthesis of lysine and meso-diaminopimelic acid, an essential component of bacterial cell walls. The sequence is that of Succinyl-diaminopimelate desuccinylase from Burkholderia orbicola (strain MC0-3).